We begin with the raw amino-acid sequence, 276 residues long: Ribosomal RNA small subunit methyltransferase A (276 aa).

6 residues coordinate S-adenosyl-L-methionine: Asn27, Leu29, Gly54, Glu75, Asp101, and Asn123.

It belongs to the class I-like SAM-binding methyltransferase superfamily. rRNA adenine N(6)-methyltransferase family. RsmA subfamily.

It localises to the cytoplasm. The enzyme catalyses adenosine(1518)/adenosine(1519) in 16S rRNA + 4 S-adenosyl-L-methionine = N(6)-dimethyladenosine(1518)/N(6)-dimethyladenosine(1519) in 16S rRNA + 4 S-adenosyl-L-homocysteine + 4 H(+). In terms of biological role, specifically dimethylates two adjacent adenosines (A1518 and A1519) in the loop of a conserved hairpin near the 3'-end of 16S rRNA in the 30S particle. May play a critical role in biogenesis of 30S subunits. The chain is Ribosomal RNA small subunit methyltransferase A from Bartonella bacilliformis (strain ATCC 35685 / KC583 / Herrer 020/F12,63).